Consider the following 209-residue polypeptide: Uracil phosphoribosyltransferase (209 aa).

Residues Arg-79, Arg-104, and 131–139 (DPMLATGGS) each bind 5-phospho-alpha-D-ribose 1-diphosphate. Uracil contacts are provided by residues Ile-194 and 199 to 201 (GDA). Residue Asp-200 coordinates 5-phospho-alpha-D-ribose 1-diphosphate.

Belongs to the UPRTase family. Mg(2+) serves as cofactor.

It carries out the reaction UMP + diphosphate = 5-phospho-alpha-D-ribose 1-diphosphate + uracil. It functions in the pathway pyrimidine metabolism; UMP biosynthesis via salvage pathway; UMP from uracil: step 1/1. Allosterically activated by GTP. In terms of biological role, catalyzes the conversion of uracil and 5-phospho-alpha-D-ribose 1-diphosphate (PRPP) to UMP and diphosphate. This chain is Uracil phosphoribosyltransferase, found in Brevibacillus brevis (strain 47 / JCM 6285 / NBRC 100599).